Reading from the N-terminus, the 146-residue chain is Hemoglobin subunit beta (146 aa).

Val1 is modified (N-acetylvaline). A Globin domain is found at 2–146 (HLTDAEKNLV…VANALAHKYH (145 aa)). His63 contributes to the heme b binding site. Position 82 is an N6-acetyllysine (Lys82). His92 lines the heme b pocket. Cys93 bears the S-nitrosocysteine mark. An N6-acetyllysine modification is found at Lys144.

The protein belongs to the globin family. Heterotetramer of two alpha chains and two beta chains. As to expression, red blood cells.

Its function is as follows. Involved in oxygen transport from the lung to the various peripheral tissues. This chain is Hemoglobin subunit beta (HBB), found in Mesocricetus brandti (Brandt's hamster).